The primary structure comprises 634 residues: MNDNIARKMQQTYNIAYWGGSYYYVNDLGNVSVCPNPDLPGAKIDLAELVKRVQQEQKHLRLPALFCFPQILQHRLRSINAAFKRARESYGYKGDYFLVYPIKVNQQRRVIESLASSGEPLGLEAGSKAELMAVLAHAGMTRTVIVCNGYKDREYIRLALIGEKLGHKVYLVIEKMSEIAQVLEEAERLNVIPRLGVRARLASQGSGKWQASGGEKSKFGLAATQVLQLVETLRAVDRLDSLQLLHFHLGSQLANIRDIATGVRESARFYVELHKLGVNIQCFDVGGGLGVDYEGTRSQSDCSVNYGLNEYANNVIWGIGDACDEHGLPHPTVITESGRALTAHHTVLVSNVIGVERNEFTQTTPPAEDASRPLTSLWETWQEMHSEGNRRSLRESLHDGQLDLHDVHTQYAHGMLDLTERAWAEELYLNICRRIQQDLDPSNRAHRPIIDELQERMADKFYVNFSLFQSLPDAWGIDQLFPVLPIEGLDKPLDRRAVLLDITCDSDGIVDHYVDGDGVAATMPMPAYDPDCPPMIGFFMVGAYQEILGNMHNLFGDTAAIDVYVFDNGEVTYNQSEEGDSVADMLQYVKLDPNVLMARFRDQVKGADLDTGLQEQFLLEFESGLYGYTYLEDE.

The residue at position 103 (lysine 103) is an N6-(pyridoxal phosphate)lysine. 283–293 contributes to the substrate binding site; that stretch reads FDVGGGLGVDY.

This sequence belongs to the Orn/Lys/Arg decarboxylase class-II family. SpeA subfamily. It depends on Mg(2+) as a cofactor. Pyridoxal 5'-phosphate is required as a cofactor.

The catalysed reaction is L-arginine + H(+) = agmatine + CO2. Its pathway is amine and polyamine biosynthesis; agmatine biosynthesis; agmatine from L-arginine: step 1/1. Its function is as follows. Catalyzes the biosynthesis of agmatine from arginine. The chain is Biosynthetic arginine decarboxylase from Photorhabdus laumondii subsp. laumondii (strain DSM 15139 / CIP 105565 / TT01) (Photorhabdus luminescens subsp. laumondii).